The primary structure comprises 313 residues: Porphobilinogen deaminase (313 aa).

Position 242 is an S-(dipyrrolylmethanemethyl)cysteine (Cys-242).

This sequence belongs to the HMBS family. In terms of assembly, monomer. Dipyrromethane is required as a cofactor.

The enzyme catalyses 4 porphobilinogen + H2O = hydroxymethylbilane + 4 NH4(+). The protein operates within porphyrin-containing compound metabolism; protoporphyrin-IX biosynthesis; coproporphyrinogen-III from 5-aminolevulinate: step 2/4. Tetrapolymerization of the monopyrrole PBG into the hydroxymethylbilane pre-uroporphyrinogen in several discrete steps. This is Porphobilinogen deaminase from Klebsiella pneumoniae subsp. pneumoniae (strain ATCC 700721 / MGH 78578).